A 538-amino-acid chain; its full sequence is Cytosolic Fe-S cluster assembly factor NAR1 homolog (538 aa).

Residues Cys19, Cys64, Cys67, Cys70, Cys218, Cys273, Cys453, and Cys457 each contribute to the [4Fe-4S] cluster site.

The protein belongs to the NARF family.

The protein resides in the cytoplasm. It is found in the nucleus. Functionally, component of the cytosolic Fe/S protein assembly machinery. Required for maturation of extramitochondrial Fe/S proteins. May play a role in the transfer of pre-assembled Fe/S clusters to target apoproteins. This Schizosaccharomyces pombe (strain 972 / ATCC 24843) (Fission yeast) protein is Cytosolic Fe-S cluster assembly factor NAR1 homolog.